We begin with the raw amino-acid sequence, 258 residues long: Ribosomal RNA small subunit methyltransferase A (258 aa).

Residues His-9, Leu-11, Gly-36, Glu-57, Asp-83, and Asn-102 each contribute to the S-adenosyl-L-methionine site.

The protein belongs to the class I-like SAM-binding methyltransferase superfamily. rRNA adenine N(6)-methyltransferase family. RsmA subfamily.

It localises to the cytoplasm. It carries out the reaction adenosine(1518)/adenosine(1519) in 16S rRNA + 4 S-adenosyl-L-methionine = N(6)-dimethyladenosine(1518)/N(6)-dimethyladenosine(1519) in 16S rRNA + 4 S-adenosyl-L-homocysteine + 4 H(+). Functionally, specifically dimethylates two adjacent adenosines (A1518 and A1519) in the loop of a conserved hairpin near the 3'-end of 16S rRNA in the 30S particle. May play a critical role in biogenesis of 30S subunits. The sequence is that of Ribosomal RNA small subunit methyltransferase A from Caulobacter vibrioides (strain ATCC 19089 / CIP 103742 / CB 15) (Caulobacter crescentus).